A 244-amino-acid polypeptide reads, in one-letter code: Biosynthetic peptidoglycan transglycosylase (244 aa).

The helical transmembrane segment at 26 to 46 (FLSYFIGLTVALTFLFRFVPI) threads the bilayer.

Belongs to the glycosyltransferase 51 family.

The protein localises to the cell inner membrane. It carries out the reaction [GlcNAc-(1-&gt;4)-Mur2Ac(oyl-L-Ala-gamma-D-Glu-L-Lys-D-Ala-D-Ala)](n)-di-trans,octa-cis-undecaprenyl diphosphate + beta-D-GlcNAc-(1-&gt;4)-Mur2Ac(oyl-L-Ala-gamma-D-Glu-L-Lys-D-Ala-D-Ala)-di-trans,octa-cis-undecaprenyl diphosphate = [GlcNAc-(1-&gt;4)-Mur2Ac(oyl-L-Ala-gamma-D-Glu-L-Lys-D-Ala-D-Ala)](n+1)-di-trans,octa-cis-undecaprenyl diphosphate + di-trans,octa-cis-undecaprenyl diphosphate + H(+). Its pathway is cell wall biogenesis; peptidoglycan biosynthesis. Peptidoglycan polymerase that catalyzes glycan chain elongation from lipid-linked precursors. In Mannheimia succiniciproducens (strain KCTC 0769BP / MBEL55E), this protein is Biosynthetic peptidoglycan transglycosylase.